We begin with the raw amino-acid sequence, 41 residues long: Large ribosomal subunit protein bL36 (41 aa).

This sequence belongs to the bacterial ribosomal protein bL36 family.

The protein is Large ribosomal subunit protein bL36 of Paracoccus denitrificans (strain Pd 1222).